Here is a 270-residue protein sequence, read N- to C-terminus: Urease accessory protein UreD (270 aa).

Belongs to the UreD family. UreD, UreF and UreG form a complex that acts as a GTP-hydrolysis-dependent molecular chaperone, activating the urease apoprotein by helping to assemble the nickel containing metallocenter of UreC. The UreE protein probably delivers the nickel.

The protein localises to the cytoplasm. In terms of biological role, required for maturation of urease via the functional incorporation of the urease nickel metallocenter. This chain is Urease accessory protein UreD, found in Microcystis aeruginosa (strain NIES-843 / IAM M-2473).